We begin with the raw amino-acid sequence, 146 residues long: Hemoglobin cathodic subunit beta (146 aa).

The Globin domain maps to 2 to 146; sequence EWSASERSTI…VVSALSKQYF (145 aa). Residues His-63 and His-92 each coordinate heme b.

It belongs to the globin family. Heterotetramer of two alpha chains and two beta chains. Red blood cells.

Involved in oxygen transport from gills to the various peripheral tissues. This is Hemoglobin cathodic subunit beta (hbb2) from Anguilla anguilla (European freshwater eel).